A 468-amino-acid polypeptide reads, in one-letter code: ATP synthase subunit beta 1 (468 aa).

Glycine 155 to threonine 162 serves as a coordination point for ATP.

Belongs to the ATPase alpha/beta chains family. As to quaternary structure, F-type ATPases have 2 components, CF(1) - the catalytic core - and CF(0) - the membrane proton channel. CF(1) has five subunits: alpha(3), beta(3), gamma(1), delta(1), epsilon(1). CF(0) has three main subunits: a(1), b(2) and c(9-12). The alpha and beta chains form an alternating ring which encloses part of the gamma chain. CF(1) is attached to CF(0) by a central stalk formed by the gamma and epsilon chains, while a peripheral stalk is formed by the delta and b chains.

The protein localises to the cell inner membrane. It catalyses the reaction ATP + H2O + 4 H(+)(in) = ADP + phosphate + 5 H(+)(out). Produces ATP from ADP in the presence of a proton gradient across the membrane. The catalytic sites are hosted primarily by the beta subunits. This chain is ATP synthase subunit beta 1, found in Syntrophotalea carbinolica (strain DSM 2380 / NBRC 103641 / GraBd1) (Pelobacter carbinolicus).